A 962-amino-acid polypeptide reads, in one-letter code: Glycine dehydrogenase (decarboxylating) (962 aa).

N6-(pyridoxal phosphate)lysine is present on Lys709.

This sequence belongs to the GcvP family. The glycine cleavage system is composed of four proteins: P, T, L and H. Pyridoxal 5'-phosphate serves as cofactor.

It catalyses the reaction N(6)-[(R)-lipoyl]-L-lysyl-[glycine-cleavage complex H protein] + glycine + H(+) = N(6)-[(R)-S(8)-aminomethyldihydrolipoyl]-L-lysyl-[glycine-cleavage complex H protein] + CO2. The glycine cleavage system catalyzes the degradation of glycine. The P protein binds the alpha-amino group of glycine through its pyridoxal phosphate cofactor; CO(2) is released and the remaining methylamine moiety is then transferred to the lipoamide cofactor of the H protein. This is Glycine dehydrogenase (decarboxylating) from Shewanella oneidensis (strain ATCC 700550 / JCM 31522 / CIP 106686 / LMG 19005 / NCIMB 14063 / MR-1).